The sequence spans 173 residues: Chorion protein S19 (173 aa).

Residues 1–21 (MNKFATLAVIFCACIVGSCYA) form the signal peptide.

This sequence belongs to the chorion protein S19 family.

It localises to the secreted. Functionally, chorion membrane (egg shell) protein; plays a role in protecting the egg from the environment. This Drosophila melanogaster (Fruit fly) protein is Chorion protein S19 (Cp19).